The primary structure comprises 332 residues: Phosphatidylglycerol--prolipoprotein diacylglyceryl transferase (332 aa).

3 helical membrane-spanning segments follow: residues 18–38 (FPYF…AYIL), 66–86 (FFTW…TMVY), and 111–131 (VGLR…GGGL). Residue R159 participates in a 1,2-diacyl-sn-glycero-3-phospho-(1'-sn-glycerol) binding. The next 2 helical transmembrane spans lie at 249–269 (GFLV…IEYF) and 302–322 (ILCV…SAYH).

This sequence belongs to the Lgt family.

The protein localises to the cell inner membrane. The enzyme catalyses L-cysteinyl-[prolipoprotein] + a 1,2-diacyl-sn-glycero-3-phospho-(1'-sn-glycerol) = an S-1,2-diacyl-sn-glyceryl-L-cysteinyl-[prolipoprotein] + sn-glycerol 1-phosphate + H(+). It participates in protein modification; lipoprotein biosynthesis (diacylglyceryl transfer). Its function is as follows. Catalyzes the transfer of the diacylglyceryl group from phosphatidylglycerol to the sulfhydryl group of the N-terminal cysteine of a prolipoprotein, the first step in the formation of mature lipoproteins. The sequence is that of Phosphatidylglycerol--prolipoprotein diacylglyceryl transferase from Treponema pallidum (strain Nichols).